A 163-amino-acid chain; its full sequence is SsrA-binding protein (163 aa).

Over residues 135–156 (GKKEHDKRDDTKEREWKIEKSR) the composition is skewed to basic and acidic residues. The tract at residues 135–163 (GKKEHDKRDDTKEREWKIEKSRTMKHAAR) is disordered.

Belongs to the SmpB family.

The protein localises to the cytoplasm. In terms of biological role, required for rescue of stalled ribosomes mediated by trans-translation. Binds to transfer-messenger RNA (tmRNA), required for stable association of tmRNA with ribosomes. tmRNA and SmpB together mimic tRNA shape, replacing the anticodon stem-loop with SmpB. tmRNA is encoded by the ssrA gene; the 2 termini fold to resemble tRNA(Ala) and it encodes a 'tag peptide', a short internal open reading frame. During trans-translation Ala-aminoacylated tmRNA acts like a tRNA, entering the A-site of stalled ribosomes, displacing the stalled mRNA. The ribosome then switches to translate the ORF on the tmRNA; the nascent peptide is terminated with the 'tag peptide' encoded by the tmRNA and targeted for degradation. The ribosome is freed to recommence translation, which seems to be the essential function of trans-translation. The polypeptide is SsrA-binding protein (Shewanella loihica (strain ATCC BAA-1088 / PV-4)).